The chain runs to 884 residues: MADAAVELPGRLAILPFRNKVLLPGAIVRIRCTNPSSVKLVEQELWQREEKGLIGVLPVHDSEAAGSLLSPGVGSDSGEGGSKAPGGSAGESTKQDTKNGKETIHWHSRGVAARALHLSRGVEKPSGRVTYIVVLEGLCRFSVQELSARGSYHVARVSRLDMTKTELEHAEQDPDLIALSRQFKATAMELISVLEQKQKTVGRTKVLLETVPVYRLADIFVASFEISFEEQLSMLDSVDLKVRLSKATELVDRHLQSILVAEKITQKVEGQLSKSQKEFLLRQQMRAIKEELGDNDDDEDDVAALERKMQNAGMPANIWKHAQRELRRLRKMQPQQPGYSSSRTYLELLAELPWQKVSEERELDLRAAKESLDRDHYGLTKVKQRIIEYLAVRKLKPDARGPVLCFVGPPGVGKTSLASSIAKALNRKFIRISLGGVKDEADIRGHRRTYIGSMPGRLIDGLKRVSVSNPVMLLDEIDKTGSDVRGDPASALLEVLDPEQNKTFNDHYLNVPFDLSKVIFVATANRMQPIPPPLLDRMEVIELPGYTPEEKLKIAMKHLIPRVLEQHGLSSTYLQIPEAMVRLIIERYTREAGVRNLERNLAALARAAAVKVAEQDSVLRLGKEIQPITTTLLDSRLADGGEVEMEVIPMGQDISNTYENPSPMIVDEAMLEKVLGPPRFDDSEAADRVASPGVSVGLVWTSFGGEVQFVEATAMVGKGDLHLTGQLGDVIKESAQLALTWVRARAADLNLSPTSDINLLESRDIHIHFPAGAVPKDGPSAGVTLVTSLVSLFSHRKVRADTAMTGEMTLRGLVLPVGGVKDKVLAAHRYGIKRVILPERNMKDLAEVPAPILSGLEILLVKRIEEVLDHAFEGGCPLRPHSKL.

The Lon N-terminal domain occupies 12 to 255 (LAILPFRNKV…KATELVDRHL (244 aa)). The tract at residues 67 to 101 (SLLSPGVGSDSGEGGSKAPGGSAGESTKQDTKNGK) is disordered. A compositionally biased stretch (gly residues) spans 75–89 (SDSGEGGSKAPGGSA). Residue 408–415 (GPPGVGKT) participates in ATP binding. Positions 689-874 (VASPGVSVGL…EEVLDHAFEG (186 aa)) constitute a Lon proteolytic domain. Catalysis depends on residues serine 780 and lysine 823. Residues 882–884 (SKL) carry the Microbody targeting signal motif.

The protein belongs to the peptidase S16 family. As to expression, expressed in roots, leaves and panicles.

The protein resides in the peroxisome matrix. The enzyme catalyses Hydrolysis of proteins in presence of ATP.. Its function is as follows. ATP-dependent serine protease that mediates the selective degradation of misfolded and unassembled polypeptides in the peroxisomal matrix. Necessary for type 2 peroxisome targeting signal (PTS2)-containing protein processing and facilitates peroxisome matrix protein import. This Oryza sativa subsp. indica (Rice) protein is Lon protease homolog 2, peroxisomal (LON1).